We begin with the raw amino-acid sequence, 368 residues long: 3-dehydroquinate synthase (368 aa).

NAD(+)-binding positions include 71-76, 105-109, 129-130, lysine 142, lysine 151, and 169-172; these read DGEAFK, GVVGD, TT, and TLRT. Positions 184, 247, and 264 each coordinate Zn(2+).

This sequence belongs to the sugar phosphate cyclases superfamily. Dehydroquinate synthase family. Co(2+) serves as cofactor. Requires Zn(2+) as cofactor. NAD(+) is required as a cofactor.

It localises to the cytoplasm. The catalysed reaction is 7-phospho-2-dehydro-3-deoxy-D-arabino-heptonate = 3-dehydroquinate + phosphate. It functions in the pathway metabolic intermediate biosynthesis; chorismate biosynthesis; chorismate from D-erythrose 4-phosphate and phosphoenolpyruvate: step 2/7. In terms of biological role, catalyzes the conversion of 3-deoxy-D-arabino-heptulosonate 7-phosphate (DAHP) to dehydroquinate (DHQ). The chain is 3-dehydroquinate synthase from Cupriavidus necator (strain ATCC 17699 / DSM 428 / KCTC 22496 / NCIMB 10442 / H16 / Stanier 337) (Ralstonia eutropha).